Consider the following 125-residue polypeptide: Small ribosomal subunit protein bS6 (125 aa).

The segment at 96–125 (VTAPSPMMREEKAKSAPQPAEEAKETTLAT) is disordered. Residues 116–125 (EEAKETTLAT) are compositionally biased toward basic and acidic residues.

It belongs to the bacterial ribosomal protein bS6 family.

Binds together with bS18 to 16S ribosomal RNA. In Nitrosospira multiformis (strain ATCC 25196 / NCIMB 11849 / C 71), this protein is Small ribosomal subunit protein bS6.